A 261-amino-acid polypeptide reads, in one-letter code: Triosephosphate isomerase (261 aa).

10 to 12 (NWK) is a binding site for substrate. H100 acts as the Electrophile in catalysis. The active-site Proton acceptor is the E172. Substrate is bound by residues G178, S218, and 239-240 (GG).

The protein belongs to the triosephosphate isomerase family. In terms of assembly, homodimer.

The protein resides in the cytoplasm. The catalysed reaction is D-glyceraldehyde 3-phosphate = dihydroxyacetone phosphate. The protein operates within carbohydrate biosynthesis; gluconeogenesis. Its pathway is carbohydrate degradation; glycolysis; D-glyceraldehyde 3-phosphate from glycerone phosphate: step 1/1. Functionally, involved in the gluconeogenesis. Catalyzes stereospecifically the conversion of dihydroxyacetone phosphate (DHAP) to D-glyceraldehyde-3-phosphate (G3P). The chain is Triosephosphate isomerase from Nocardia farcinica (strain IFM 10152).